A 406-amino-acid polypeptide reads, in one-letter code: LIM/homeobox protein Lhx2 (406 aa).

2 consecutive LIM zinc-binding domains span residues 53-105 and 115-168; these read CAGC…CKED and CARC…CRLH. Positions 250–270 are disordered; that stretch reads DAEHLDRDQPYPSSQKTKRMR. Residues 266-325 constitute a DNA-binding region (homeobox); sequence TKRMRTSFKHHQLRTMKSYFAINHNPDAKDLKQLAQKTGLTKRVLQVWFQNARAKFRRNL. Positions 307-323 match the Nuclear localization signal motif; that stretch reads KRVLQVWFQNARAKFRR. Over residues 328–356 the composition is skewed to polar residues; sequence QENTGVDKTSDATLQTGTPSGPASELSNA. Disordered stretches follow at residues 328 to 375 and 387 to 406; these read QENT…SPTL and GNLE…TNLF. Residues 357–375 show a composition bias toward low complexity; sequence SLSPSSTPTTLTDLTSPTL. The span at 396 to 406 shows a compositional bias: polar residues; the sequence is SPSQTTLTNLF.

Interacts (via LIM domains) with CITED2. Interacts with POU4F2 isoform 1.

Its subcellular location is the nucleus. Acts as a transcriptional activator. Stimulates the promoter of the alpha-glycoprotein gene. Transcriptional regulatory protein involved in the control of cell differentiation in developing lymphoid and neural cell types. This is LIM/homeobox protein Lhx2 (Lhx2) from Mus musculus (Mouse).